The chain runs to 266 residues: Undecaprenyl-diphosphatase (266 aa).

The next 8 membrane-spanning stretches (helical) occupy residues 1 to 21 (METFQIILLALIQGLTEFLPI), 39 to 59 (QGFSFDVAVNTGSLLAVVIYF), 87 to 107 (WWIILATIPAVIFGFAAKDFI), 111 to 131 (LRNTTVIASTTIIFGLLLWWA), 149 to 169 (ALLIGFAQALAIIPGTSRSGA), 183 to 203 (AAAKFSFLMSVPVGLGAAILV), 218 to 238 (ALGIGMLVSFLAAYACIYYFL), and 246 to 266 (MTPFVIYRLILGSVLFALILW).

Belongs to the UppP family.

The protein localises to the cell inner membrane. The catalysed reaction is di-trans,octa-cis-undecaprenyl diphosphate + H2O = di-trans,octa-cis-undecaprenyl phosphate + phosphate + H(+). Its function is as follows. Catalyzes the dephosphorylation of undecaprenyl diphosphate (UPP). Confers resistance to bacitracin. In Shewanella denitrificans (strain OS217 / ATCC BAA-1090 / DSM 15013), this protein is Undecaprenyl-diphosphatase.